Consider the following 589-residue polypeptide: MITRLSELFLRTLREDPADAEVPSHKLLVRAGYVRRVAPGVYTWLPLGLRAMRKIEDVIRQEMNAIGGQEMLFPALLPREPYEESNRWTEYGDNLFRLKDRKGADMLLGPTHEEMFTTAVKDMYSSYKDFPVTLYQIQTKYRDEERPRAGVLRGREFTMKDSYSFDMTDEGLDESYARHRKAYQNIFDRLEIDYAICKATSGAMGGSASEEFLAVSEVGEDTFVRATEGEYAANVEAVVTQAPEEISFEGLPEAQEHETPKSETIESLVEWAKGAGITVDGREVTAADTLKCMMIKVAAPAATEEEKEWELAAVLIPGDRALDEKRLEASLEPAEFELAGEGDFKKNSFLVKGYVGPRVLNAHDVKVYADPRVVSGTSWITGADAPQRHVVGLVAGRDFTVDEFIEAAEVKEGDPAPNGQGTLTLERGIELGHIFQLGRKYTEAFDVQILDENGKRAVPTMGSYGIGVTRMLAVLAEQRHDEKGLNWPVAVAPYQVHVAVANKDAAALEAGQKLVEDLDRAGIEVLYDDRPKVSPGVKFKDAELLGMPFIAILGRAFADGIIELRIRGGETREVPADSIVDTLTELIRG.

This sequence belongs to the class-II aminoacyl-tRNA synthetase family. ProS type 1 subfamily. In terms of assembly, homodimer.

It is found in the cytoplasm. The enzyme catalyses tRNA(Pro) + L-proline + ATP = L-prolyl-tRNA(Pro) + AMP + diphosphate. Its function is as follows. Catalyzes the attachment of proline to tRNA(Pro) in a two-step reaction: proline is first activated by ATP to form Pro-AMP and then transferred to the acceptor end of tRNA(Pro). As ProRS can inadvertently accommodate and process non-cognate amino acids such as alanine and cysteine, to avoid such errors it has two additional distinct editing activities against alanine. One activity is designated as 'pretransfer' editing and involves the tRNA(Pro)-independent hydrolysis of activated Ala-AMP. The other activity is designated 'posttransfer' editing and involves deacylation of mischarged Ala-tRNA(Pro). The misacylated Cys-tRNA(Pro) is not edited by ProRS. The sequence is that of Proline--tRNA ligase from Corynebacterium aurimucosum (strain ATCC 700975 / DSM 44827 / CIP 107346 / CN-1) (Corynebacterium nigricans).